The chain runs to 551 residues: Formate--tetrahydrofolate ligase (551 aa).

Residue 54-61 (TPPGEGKT) participates in ATP binding.

Belongs to the formate--tetrahydrofolate ligase family.

The catalysed reaction is (6S)-5,6,7,8-tetrahydrofolate + formate + ATP = (6R)-10-formyltetrahydrofolate + ADP + phosphate. The protein operates within one-carbon metabolism; tetrahydrofolate interconversion. The sequence is that of Formate--tetrahydrofolate ligase from Myxococcus xanthus (strain DK1622).